We begin with the raw amino-acid sequence, 439 residues long: ATP-dependent RNA helicase RhlB (439 aa).

The short motif at 9–37 is the Q motif element; it reads QKFADLPLHPEVKQALAENGFEFCTPIQA. Residues 40 to 219 form the Helicase ATP-binding domain; that stretch reads LPVLLQSKDI…YDHMNEPVKV (180 aa). 53 to 60 is a binding site for ATP; the sequence is AQTGTGKT. Positions 165 to 168 match the DEAD box motif; sequence DEAD. The Helicase C-terminal domain maps to 243-390; sequence KMRLLLTLIE…VSNYDRDALL (148 aa). The interval 395–439 is disordered; the sequence is PPVKIHRRHPAGARNLRERSGAGRPQGAHRSGGRPPRHDRTRRQP. Basic residues predominate over residues 425-439; sequence SGGRPPRHDRTRRQP.

This sequence belongs to the DEAD box helicase family. RhlB subfamily. In terms of assembly, component of the RNA degradosome, which is a multiprotein complex involved in RNA processing and mRNA degradation.

The protein resides in the cytoplasm. The catalysed reaction is ATP + H2O = ADP + phosphate + H(+). Its function is as follows. DEAD-box RNA helicase involved in RNA degradation. Has RNA-dependent ATPase activity and unwinds double-stranded RNA. The chain is ATP-dependent RNA helicase RhlB from Shewanella sp. (strain ANA-3).